A 191-amino-acid polypeptide reads, in one-letter code: Small ribosomal subunit protein uS4A (191 aa).

Phosphoserine occurs at positions 50 and 161. The 75-residue stretch at 107 to 181 folds into the S4 RNA-binding domain; it reads RRLQTQVFKL…CKRKRLRSQE (75 aa). Tyrosine 164 is modified (phosphotyrosine). A disordered region spans residues 166–191; sequence GGRPGRCKRKRLRSQEGGEGEEAEEE. Serine 179 is subject to Phosphoserine.

It belongs to the universal ribosomal protein uS4 family. Component of the small ribosomal subunit (SSU). Mature yeast ribosomes consist of a small (40S) and a large (60S) subunit. The 40S small subunit contains 1 molecule of ribosomal RNA (18S rRNA) and at least 33 different proteins. The large 60S subunit contains 3 rRNA molecules (25S, 5.8S and 5S rRNA) and at least 46 different proteins. Interacts with snoRNA U3. uS11 interacts with MPP10. Component of the ribosomal small subunit (SSU) processome composed of at least 40 protein subunits and snoRNA U3.

It is found in the cytoplasm. Component of the ribosome, a large ribonucleoprotein complex responsible for the synthesis of proteins in the cell. The small ribosomal subunit (SSU) binds messenger RNAs (mRNAs) and translates the encoded message by selecting cognate aminoacyl-transfer RNA (tRNA) molecules. The large subunit (LSU) contains the ribosomal catalytic site termed the peptidyl transferase center (PTC), which catalyzes the formation of peptide bonds, thereby polymerizing the amino acids delivered by tRNAs into a polypeptide chain. The nascent polypeptides leave the ribosome through a tunnel in the LSU and interact with protein factors that function in enzymatic processing, targeting, and the membrane insertion of nascent chains at the exit of the ribosomal tunnel. uS4 is involved in nucleolar processing of pre-18S ribosomal RNA and ribosome assembly. The polypeptide is Small ribosomal subunit protein uS4A (rps901) (Schizosaccharomyces pombe (strain 972 / ATCC 24843) (Fission yeast)).